We begin with the raw amino-acid sequence, 399 residues long: Succinate--CoA ligase [ADP-forming] subunit beta (399 aa).

One can recognise an ATP-grasp domain in the interval 9 to 254 (KELLAKYGVG…ETEEDPAEIE (246 aa)). Residues K46, 53-55 (GRG), V112, and E117 each bind ATP. Residues N209 and D223 each coordinate Mg(2+). Substrate contacts are provided by residues N274 and 331–333 (GIM).

This sequence belongs to the succinate/malate CoA ligase beta subunit family. Heterotetramer of two alpha and two beta subunits. Mg(2+) serves as cofactor.

The catalysed reaction is succinate + ATP + CoA = succinyl-CoA + ADP + phosphate. The enzyme catalyses GTP + succinate + CoA = succinyl-CoA + GDP + phosphate. The protein operates within carbohydrate metabolism; tricarboxylic acid cycle; succinate from succinyl-CoA (ligase route): step 1/1. In terms of biological role, succinyl-CoA synthetase functions in the citric acid cycle (TCA), coupling the hydrolysis of succinyl-CoA to the synthesis of either ATP or GTP and thus represents the only step of substrate-level phosphorylation in the TCA. The beta subunit provides nucleotide specificity of the enzyme and binds the substrate succinate, while the binding sites for coenzyme A and phosphate are found in the alpha subunit. This Novosphingobium aromaticivorans (strain ATCC 700278 / DSM 12444 / CCUG 56034 / CIP 105152 / NBRC 16084 / F199) protein is Succinate--CoA ligase [ADP-forming] subunit beta.